The following is a 246-amino-acid chain: tRNA (guanine-N(1)-)-methyltransferase (246 aa).

S-adenosyl-L-methionine-binding positions include G113 and 133–138; that span reads IGDYVL.

It belongs to the RNA methyltransferase TrmD family. As to quaternary structure, homodimer.

Its subcellular location is the cytoplasm. The enzyme catalyses guanosine(37) in tRNA + S-adenosyl-L-methionine = N(1)-methylguanosine(37) in tRNA + S-adenosyl-L-homocysteine + H(+). In terms of biological role, specifically methylates guanosine-37 in various tRNAs. The polypeptide is tRNA (guanine-N(1)-)-methyltransferase (Haemophilus influenzae (strain 86-028NP)).